The chain runs to 234 residues: tRNA (guanine-N(1)-)-methyltransferase (234 aa).

Glycine 113 lines the S-adenosyl-L-methionine pocket.

This sequence belongs to the RNA methyltransferase TrmD family. In terms of assembly, homodimer.

It localises to the cytoplasm. It catalyses the reaction guanosine(37) in tRNA + S-adenosyl-L-methionine = N(1)-methylguanosine(37) in tRNA + S-adenosyl-L-homocysteine + H(+). In terms of biological role, specifically methylates guanosine-37 in various tRNAs. The polypeptide is tRNA (guanine-N(1)-)-methyltransferase (Gluconobacter oxydans (strain 621H) (Gluconobacter suboxydans)).